Consider the following 601-residue polypeptide: DNA mismatch repair protein MutL (601 aa).

This sequence belongs to the DNA mismatch repair MutL/HexB family.

Its function is as follows. This protein is involved in the repair of mismatches in DNA. It is required for dam-dependent methyl-directed DNA mismatch repair. May act as a 'molecular matchmaker', a protein that promotes the formation of a stable complex between two or more DNA-binding proteins in an ATP-dependent manner without itself being part of a final effector complex. This is DNA mismatch repair protein MutL from Listeria monocytogenes serovar 1/2a (strain ATCC BAA-679 / EGD-e).